Here is a 343-residue protein sequence, read N- to C-terminus: Lumican (343 aa).

An N-terminal signal peptide occupies residues 1 to 18 (MTLNSLPIFLVLISGIFC). Q19 is subject to Pyrrolidone carboxylic acid. A sulfotyrosine mark is found at Y20 and Y22. The LRRNT domain maps to 31 to 69 (DPFGPSTAVCAPECNCPLSYPTAMYCDNLKLKTIPIVPS). LRR repeat units follow at residues 70-91 (GIKY…TFDN), 94-117 (DLQW…VFSK), 120-140 (NLKK…PLPK), 141-162 (TLDD…ALEG), 165-186 (NLTV…GAFK), 190-211 (SLLY…LPHS), 212-232 (LLML…YFQG), and 235-255 (TLQY…PGNV). An N-linked (GlcNAc...) (keratan sulfate) asparagine glycan is attached at N91. A glycan (N-linked (GlcNAc...) (keratan sulfate) asparagine) is linked at N130. An N-linked (GlcNAc...) (keratan sulfate) asparagine glycan is attached at N165. N-linked (GlcNAc...) (keratan sulfate) asparagine glycosylation occurs at N257. LRR repeat units follow at residues 260-281 (SLVE…SENL), 282-301 (ENFY…SFCK), and 310-330 (KITH…PQEM). The cysteines at positions 300 and 333 are disulfide-linked. A glycan (N-linked (GlcNAc...) asparagine) is linked at N320.

Belongs to the small leucine-rich proteoglycan (SLRP) family. SLRP class II subfamily. As to quaternary structure, binds to laminin. In terms of processing, contains keratan sulfate.

Its subcellular location is the secreted. The protein localises to the extracellular space. It is found in the extracellular matrix. The sequence is that of Lumican (LUM) from Coturnix japonica (Japanese quail).